A 243-amino-acid chain; its full sequence is DNA repair protein RecO (243 aa).

Belongs to the RecO family.

In terms of biological role, involved in DNA repair and RecF pathway recombination. In Vibrio vulnificus (strain CMCP6), this protein is DNA repair protein RecO.